The sequence spans 864 residues: E3 ubiquitin-protein ligase Itchy (864 aa).

Residues 1–115 form the C2 domain; sequence MSDSGPQLDS…LKSNNMKLEE (115 aa). Ser2 carries the N-acetylserine modification. Residues 151–164 show a composition bias toward polar residues; that stretch reads NGETSCSESTTQND. Positions 151–294 are disordered; it reads NGETSCSEST…SQAPLPPGWE (144 aa). Over residues 165-174 the composition is skewed to basic and acidic residues; that stretch reads DGCRTRDDTR. A compositionally biased stretch (low complexity) spans 195–206; that stretch reads NGNNSPSLSNGG. The residue at position 199 (Ser199) is a Phosphoserine; by MAPK8. Over residues 210 to 224 the composition is skewed to pro residues; it reads SRPPRPSRPPPPTPR. Phosphothreonine; by MAPK8 is present on Thr222. The segment covering 230–259 has biased composition (low complexity); the sequence is NGSPSTNSDSDGSSTGSLPPTNTNVNTSTS. Residue Ser232 is modified to Phosphoserine; by MAPK8. WW domains are found at residues 287–320 and 319–352; these read APLP…RPEP and EPLP…RPTL. Residue Thr346 is modified to Phosphothreonine; by SGK3. The interval 356–432 is required for interaction with FYN; sequence RNYEQWQLQR…RITQWEDPRS (77 aa). The residue at position 381 (Tyr381) is a Phosphotyrosine; by FYN. 2 consecutive WW domains span residues 399–432 and 439–472; these read GPLP…DPRS and KPLP…DPRT. A Phosphoserine; by SGK3 modification is found at Ser411. The region spanning 530 to 864 is the HECT domain; sequence SPQDLRRRLW…IEETEGFGQE (335 aa). Positions 535–544 are MAP kinase docking site; the sequence is RRRLWVIFPG. The active-site Glycyl thioester intermediate is Cys832.

In terms of assembly, monomer. Part of a ternary complex composed of SMAD3, ITCH/AIP4 and NEDD9/HEF1; within the complex NEDD9/HEF1 interacts (via N-terminus) with ITCH/AIP4 (via WW domains); the complex mediates ubiquitination and proteasomal degradation of NEDD9/HEF1. Interacts (via WW domains) with OCNL. Interacts (via WW domains) with NOTCH1. Interacts (via WW domains) JUN. Interacts with JUNB; the interaction promotes ITCH-mediated ubiquitination and degradation of JUNB. Interacts with FYN; the interaction phosphorylates ITCH on Tyr-381 decreasing binding of JUNB. Interacts (via WW domain 2) with N4BP1; the interaction inhibits the E3 ubiquitin-protein ligase activity. Interacts with NDFIP1 and NDFIP2; the interaction with NDFIP proteins activates the E3 ubiquitin-protein ligase and may induce its recruitment to exosomes. Interacts with ARHGEF7. Interacts with RNF11. Interacts (via the WW 1 domain) with NFE2 (via the PXY motif 1); the interaction promotes 'Lys-63'-linked ubiquitination of NFE2, retains it in the cytoplasm and prevents its transactivation activity. Interacts (via WW domains) with CXCR4 (via C-terminus); the interaction depends on CXCR4 phosphorylation. Found in a complex with E3 ligase DTX3L and ESCRT-0 components HGS and STAM. Interacts with DTX3L (via C-terminus); the interaction is increased upon CXCL12 stimulation and inhibits ITCH catalytic activity (the interaction is direct). Interacts with HGS. Interacts (via WW domains) with PCBP2 within a complex containing ITCH, MAVS and PCBP2. Interacts (via WW domains) with TXNIP (via C-terminus). Interacts with p15 BID. Interacts with ERBB4. Interacts with DTX1. Interacts with SPART. Interacts with SNX9 and SNX18. Interacts (via its WW domains) with ATN1. Interacts (via WW domains) with SGK3. Interacts with CBLC. Interacts with OTUD7B. Interacts (via WW domain 1,2 and 3) with PI4K2A; the interaction inhibits PI4K2A catalytic activity and promotes ITCH catalytic activity. Interacts with ARRDC4. Part of a complex containing ITCH, NDFIP1 and MAP3K7. Interacts with UBE2L3; the interaction is mediated by NDFIP1. Interacts with MAPK8/JNK1. Interacts (via WW domains) with ARRDC1 (via PPxY motifs); the interaction is direct and participates in the recruitment of the ubiquitin-protein ligase ITCH to the NOTCH1 receptor. Interacts (via WW domains) with ARRDC2. Interacts (via WW domains) with ARRDC3. Interacts directly with LDLRAD3; this interaction promotes ITCH auto-ubiquitination leading to its degradation. Interacts with ENTREP1; enhances the ubiquitination of CXCR4 by ITCH and its subsequent endocytosis. Interacts with USP12 and WDR48/UAF1; the interaction is more efficient when both USP12 and WDR48/UAF1 are involved and may facilitate the recruitment of the USP12 deubiquitinase complex to Notch. (Microbial infection) Interacts with Epstein-Barr virus LMP2A. On T-cell activation, phosphorylation by the JNK cascade on serine and threonine residues surrounding the PRR domain accelerates the ubiquitination and degradation of JUN and JUNB. The increased ITCH catalytic activity due to phosphorylation by JNK1 may occur due to a conformational change disrupting the interaction between the PRR/WW motifs domain and the HECT domain and, thus exposing the HECT domain. Phosphorylation by FYN reduces interaction with JUNB and negatively controls JUN ubiquitination and degradation. Interacts directly with LDLRAD3; this interaction promotes ITCH auto-ubiquitination leading to its degradation. In terms of processing, monoubiquitinated. Autopolyubiquitinated with 'Lys-63' linkages which does not lead to protein degradation. Detected in uterus (at protein level). Widely expressed.

It localises to the cell membrane. Its subcellular location is the cytoplasm. It is found in the nucleus. The protein resides in the early endosome membrane. The protein localises to the endosome membrane. The catalysed reaction is S-ubiquitinyl-[E2 ubiquitin-conjugating enzyme]-L-cysteine + [acceptor protein]-L-lysine = [E2 ubiquitin-conjugating enzyme]-L-cysteine + N(6)-ubiquitinyl-[acceptor protein]-L-lysine.. Its pathway is protein modification; protein ubiquitination. Its activity is regulated as follows. Activated by NDFIP1- and NDFIP2-binding. Activated by PI4K2A-binding. Inhibited by DTX3L-binding. Inhibited by N4BP1 binding. Functionally, acts as an E3 ubiquitin-protein ligase which accepts ubiquitin from an E2 ubiquitin-conjugating enzyme in the form of a thioester and then directly transfers the ubiquitin to targeted substrates. It catalyzes 'Lys-29'-, 'Lys-48'- and 'Lys-63'-linked ubiquitin conjugation. Involved in the control of inflammatory signaling pathways. Is an essential component of a ubiquitin-editing protein complex, comprising also TNFAIP3, TAX1BP1 and RNF11, that ensures the transient nature of inflammatory signaling pathways. Promotes the association of the complex after TNF stimulation. Once the complex is formed, TNFAIP3 deubiquitinates 'Lys-63' polyubiquitin chains on RIPK1 and catalyzes the formation of 'Lys-48'-polyubiquitin chains. This leads to RIPK1 proteasomal degradation and consequently termination of the TNF- or LPS-mediated activation of NFKB1. Ubiquitinates RIPK2 by 'Lys-63'-linked conjugation and influences NOD2-dependent signal transduction pathways. Regulates the transcriptional activity of several transcription factors involved in immune response. Ubiquitinates NFE2 by 'Lys-63' linkages and is implicated in the control of the development of hematopoietic lineages. Mediates JUN ubiquitination and degradation. Mediates JUNB ubiquitination and degradation. Critical regulator of type 2 helper T (Th2) cell cytokine production by inducing JUNB ubiquitination and degradation. Involved in the negative regulation of MAVS-dependent cellular antiviral responses. Ubiquitinates MAVS through 'Lys-48'-linked conjugation resulting in MAVS proteasomal degradation. Following ligand stimulation, regulates sorting of Wnt receptor FZD4 to the degradative endocytic pathway probably by modulating PI42KA activity. Ubiquitinates PI4K2A and negatively regulates its catalytic activity. Ubiquitinates chemokine receptor CXCR4 and regulates sorting of CXCR4 to the degradative endocytic pathway following ligand stimulation by ubiquitinating endosomal sorting complex required for transport ESCRT-0 components HGS and STAM. Targets DTX1 for lysosomal degradation and controls NOTCH1 degradation, in the absence of ligand, through 'Lys-29'-linked polyubiquitination. Ubiquitinates SNX9. Ubiquitinates MAP3K7 through 'Lys-48'-linked conjugation. Together with UBR5, involved in the regulation of apoptosis and reactive oxygen species levels through the ubiquitination and proteasomal degradation of TXNIP: catalyzes 'Lys-48'-/'Lys-63'-branched ubiquitination of TXNIP. ITCH synthesizes 'Lys-63'-linked chains, while UBR5 is branching multiple 'Lys-48'-linked chains of substrate initially modified. Mediates the antiapoptotic activity of epidermal growth factor through the ubiquitination and proteasomal degradation of p15 BID. Ubiquitinates BRAT1 and this ubiquitination is enhanced in the presence of NDFIP1. Ubiquitinates NEDD9/HEF1, resulting in proteasomal degradation of NEDD9/HEF1. This chain is E3 ubiquitin-protein ligase Itchy (Itch), found in Mus musculus (Mouse).